A 265-amino-acid chain; its full sequence is Energy-coupling factor transporter transmembrane protein EcfT (265 aa).

Helical transmembrane passes span 32–52 (MVLLFVIDDFTGYAFPAVFII), 72–92 (LVIIIVLTFVLNLFMIKGRVI), 115–135 (LIMLIVGTSLLTLTTSPIALT), 150–170 (VPAHELAMMMTIALRFIPTLM), and 245–265 (LAAFIATGLLAVGSIMSRFIW).

The protein belongs to the energy-coupling factor EcfT family. In terms of assembly, forms a stable energy-coupling factor (ECF) transporter complex composed of 2 membrane-embedded substrate-binding proteins (S component), 2 ATP-binding proteins (A component) and 2 transmembrane proteins (T component). May be able to interact with more than 1 S component at a time.

It localises to the cell membrane. Its function is as follows. Transmembrane (T) component of an energy-coupling factor (ECF) ABC-transporter complex. Unlike classic ABC transporters this ECF transporter provides the energy necessary to transport a number of different substrates. The protein is Energy-coupling factor transporter transmembrane protein EcfT of Thermosediminibacter oceani (strain ATCC BAA-1034 / DSM 16646 / JW/IW-1228P).